The primary structure comprises 267 residues: Putative phosphatase bbp_030 (267 aa).

The Nucleophile role is filled by aspartate 8. Mg(2+) is bound at residue aspartate 8. Position 9 (leucine 9) interacts with phosphate. Aspartate 10 is a binding site for Mg(2+). Phosphate is bound by residues 42–43 (TG) and lysine 191. Aspartate 214 provides a ligand contact to Mg(2+). Residue asparagine 217 coordinates phosphate.

The protein belongs to the HAD-like hydrolase superfamily. Cof family. Mg(2+) serves as cofactor.

In Buchnera aphidicola subsp. Baizongia pistaciae (strain Bp), this protein is Putative phosphatase bbp_030.